We begin with the raw amino-acid sequence, 264 residues long: Glutamate racemase (264 aa).

Residues 10 to 11 (DS) and 42 to 43 (YG) each bind substrate. The Proton donor/acceptor role is filled by cysteine 73. Residue 74 to 75 (NT) participates in substrate binding. The active-site Proton donor/acceptor is cysteine 183. 184–185 (TH) provides a ligand contact to substrate.

This sequence belongs to the aspartate/glutamate racemases family.

It catalyses the reaction L-glutamate = D-glutamate. The protein operates within cell wall biogenesis; peptidoglycan biosynthesis. Provides the (R)-glutamate required for cell wall biosynthesis. This Streptococcus pyogenes serotype M4 (strain MGAS10750) protein is Glutamate racemase.